Reading from the N-terminus, the 86-residue chain is Small ribosomal subunit protein bS16 (86 aa).

The protein belongs to the bacterial ribosomal protein bS16 family.

The protein is Small ribosomal subunit protein bS16 of Bordetella avium (strain 197N).